We begin with the raw amino-acid sequence, 259 residues long: MATLFIADLHLSQQEPAITAGFLRFLAEEAPKAEALYILGDFFDYWIGDDDPQPLHRQVAGALRQLSDNGVPCYFICGNRDFLLGKSYAKRCGMTLLPDEQIITLYGQPILLLHGDTLCSDDRDYQRYRRRVHNPLLQWLFRRLPLRLRLKIAVGMRQQSQRSNSAKAMTIMDVNQETVCATLRRHGVQRMIHGHTHRPALHHFSLDDGRCALRAVLGAWHTHGSMIRVDAQGIHLIELPAHPAEDEIITTRLRSANLV.

5 residues coordinate Mn(2+): D8, H10, D41, N79, and H114. 79–80 (NR) lines the substrate pocket. Substrate-binding residues include D122, S160, N164, K167, and H195. Positions 195 and 197 each coordinate Mn(2+).

This sequence belongs to the LpxH family. Mn(2+) serves as cofactor.

It is found in the cell inner membrane. It catalyses the reaction UDP-2-N,3-O-bis[(3R)-3-hydroxytetradecanoyl]-alpha-D-glucosamine + H2O = 2-N,3-O-bis[(3R)-3-hydroxytetradecanoyl]-alpha-D-glucosaminyl 1-phosphate + UMP + 2 H(+). It functions in the pathway glycolipid biosynthesis; lipid IV(A) biosynthesis; lipid IV(A) from (3R)-3-hydroxytetradecanoyl-[acyl-carrier-protein] and UDP-N-acetyl-alpha-D-glucosamine: step 4/6. Its function is as follows. Hydrolyzes the pyrophosphate bond of UDP-2,3-diacylglucosamine to yield 2,3-diacylglucosamine 1-phosphate (lipid X) and UMP by catalyzing the attack of water at the alpha-P atom. Involved in the biosynthesis of lipid A, a phosphorylated glycolipid that anchors the lipopolysaccharide to the outer membrane of the cell. This is UDP-2,3-diacylglucosamine hydrolase from Edwardsiella ictaluri (strain 93-146).